Reading from the N-terminus, the 20-residue chain is Pregnancy-associated glycoprotein 71D (20 aa).

Residue asparagine 4 is glycosylated (N-linked (GlcNAc...) asparagine).

It belongs to the peptidase A1 family. Chorionic epithelium (trophectoderm) and placental cotyledons.

It localises to the secreted. The protein resides in the extracellular space. The chain is Pregnancy-associated glycoprotein 71D from Bison bonasus (European bison).